The following is a 120-amino-acid chain: Large ribosomal subunit protein uL22 (120 aa).

The segment at 1 to 22 is disordered; sequence MLVNRRYTAKGKNLPSSPKKVR.

This sequence belongs to the universal ribosomal protein uL22 family. In terms of assembly, part of the 50S ribosomal subunit.

This protein binds specifically to 23S rRNA; its binding is stimulated by other ribosomal proteins, e.g. L4, L17, and L20. It is important during the early stages of 50S assembly. It makes multiple contacts with different domains of the 23S rRNA in the assembled 50S subunit and ribosome. Its function is as follows. The globular domain of the protein is located near the polypeptide exit tunnel on the outside of the subunit, while an extended beta-hairpin is found that lines the wall of the exit tunnel in the center of the 70S ribosome. In Borreliella burgdorferi (strain ATCC 35210 / DSM 4680 / CIP 102532 / B31) (Borrelia burgdorferi), this protein is Large ribosomal subunit protein uL22.